The sequence spans 313 residues: uncharacterized protein (313 aa).

29–61 contributes to the NADP(+) binding site; that stretch reads ALVTGGGTGLGKAIATTFAHLGASVAIAARRLD.

Belongs to the short-chain dehydrogenases/reductases (SDR) family. 2,4-dienoyl-CoA reductase subfamily.

This is an uncharacterized protein from Caenorhabditis elegans.